Here is a 2772-residue protein sequence, read N- to C-terminus: Protein DDB_G0276689 (2772 aa).

6 disordered regions span residues 50-82, 371-415, 475-514, 612-650, 685-708, and 933-982; these read QQLK…NNNN, NLET…NGKS, LDIN…KNNL, NKNN…NNNE, LRGS…DSSL, and LVNN…NNSN. Composition is skewed to low complexity over residues 376 to 412, 478 to 514, 614 to 649, and 688 to 708; these read NNNN…NNNN, NSKN…KNNL, and SFSP…DSSL. The LRR 1 repeat unit spans residues 1065–1089; sequence LSKWILNLDDNNYNHIPFMSLVLMP. The tract at residues 1282–1319 is disordered; it reads NNNNIDNNNNNNNNNNNNNNNNNNNNNNNNNNNNNNNN. 2 LRR repeats span residues 1393–1416 and 1543–1567; these read LSNL…TPKN and HKDV…SFSN. Residues 1587 to 1619 are compositionally biased toward low complexity; that stretch reads QNNNYNNNNYNNNYNNNNNNNNNNNNNNNNNNN. Positions 1587–1622 are disordered; the sequence is QNNNYNNNNYNNNYNNNNNNNNNNNNNNNNNNNIDN. An LRR 4 repeat occupies 1899–1922; it reads LEELTKQEIGYQVLLVLPTDLQVE. 2 stretches are compositionally biased toward polar residues: residues 1999 to 2011 and 2073 to 2083; these read YVSN…NDQI and LNIVHSTSPNS. 3 disordered regions span residues 1999-2021, 2054-2083, and 2367-2386; these read YVSN…KDKK, EISN…SPNS, and NNSS…NNNN. One copy of the LRR 5 repeat lies at 2414–2439; the sequence is TTIINNIEMDKNRLDEAIYYLKKYGN.

The polypeptide is Protein DDB_G0276689 (Dictyostelium discoideum (Social amoeba)).